The following is a 375-amino-acid chain: CD2 homolog (375 aa).

Residues 1-16 (MIIILIFLIIPNIVLS) form the signal peptide. The Extracellular portion of the chain corresponds to 17–207 (IDYWVSFNKT…YLDFFQVASY (191 aa)). Asn24, Asn80, Asn105, Asn122, Asn134, Asn145, Asn168, Asn176, and Asn183 each carry an N-linked (GlcNAc...) asparagine; by host glycan. Intrachain disulfides connect Cys123–Cys190 and Cys130–Cys173. Residues 208-228 (MFYMIIFIATGIIASIFISII) form a helical membrane-spanning segment. Residues 229–375 (TFLSLRKRKK…ISLIHVDRII (147 aa)) lie on the Cytoplasmic side of the membrane. A disordered region spans residues 242–278 (EIESPSPSESNEEEQCQHDDTTSIHEPSPREPLLPKP). Basic and acidic residues predominate over residues 256–270 (QCQHDDTTSIHEPSP). Tandem repeats lie at residues 305 to 310 (KLCPPP), 311 to 316 (KPCPPP), 317 to 322 (KPCPPP), 323 to 328 (KPCPPP), and 329 to 334 (KPCPSS). Residues 305–334 (KLCPPPKPCPPPKPCPPPKPCPPPKPCPSS) form a 5 X 6 AA tandem repeats of K-[LP]-C-[PRS]-[PS]-[PS] region. The segment at 323–350 (KPCPPPKPCPSSESCSPPESYSLPKPLP) is disordered. Low complexity predominate over residues 332-346 (PSSESCSPPESYSLP).

The protein belongs to the asfivirus CD2 homolog protein family. As to quaternary structure, both glycosylated and nonglycosylated forms interact (via C-terminus) with the host AP-1 complex. Cleaved into two fragments of 63 kDa and 26 kDa containing respectively the glycosylated N-terminus and the nonglycosylated C-terminus. A full-length 89-kDa glycosylated form also exists.

Its subcellular location is the host membrane. The protein localises to the virion membrane. It is found in the host Golgi apparatus. In terms of biological role, may play an immunosuppressive role by inhibiting lymphocyte proliferation and subsequently facilitating viral replication and generalization of infection. Responsible for viral hemadsorption, which may help viral spread. Increases virus replication in the tick vector at the step of virus uptake or replication in the tick gut. May play a role in the host Golgi reorganization to yield viral factories. May play a role in host cell penetration. This Ornithodoros (relapsing fever ticks) protein is CD2 homolog.